Here is a 76-residue protein sequence, read N- to C-terminus: uncharacterized protein (76 aa).

Helical transmembrane passes span 9 to 29 (AIGI…LQAV) and 45 to 65 (LLMI…FLDY).

The protein resides in the cell membrane. This is an uncharacterized protein from Bacillus subtilis (strain 168).